Consider the following 197-residue polypeptide: GCN5-related N-acetyltransferase 1, chloroplastic (197 aa).

A chloroplast-targeting transit peptide spans 1–37 (MFLGGTISTPPASLRLRSTLNPQNAVTQSSSQATFPA). Over residues 23–34 (QNAVTQSSSQAT) the composition is skewed to polar residues. A disordered region spans residues 23-46 (QNAVTQSSSQATFPAAMQRKPPSY). The region spanning 58–195 (FLLRRTTEGL…GMVFIRKQRN (138 aa)) is the N-acetyltransferase domain. Acetyl-CoA contacts are provided by residues 129 to 131 (VVV), 137 to 142 (SCGLGK), 165 to 167 (EPR), and Tyr172. Tyr172 serves as the catalytic Proton donor.

This sequence belongs to the acetyltransferase family. GNAT subfamily. Oligomer. In terms of processing, autoacetylated. In terms of tissue distribution, expressed in green tissues. Accumulates mainly in flowers and young leaves, and, to a lower extent, in stems and mature leaves, but barely in roots.

Its subcellular location is the plastid. The protein localises to the chloroplast. The catalysed reaction is an N-terminal L-alpha-aminoacyl-[protein] + acetyl-CoA = N-terminal N(alpha)-acetyl-L-alpha-aminoacyl-[protein] + CoA + H(+). It carries out the reaction L-lysyl-[protein] + acetyl-CoA = N(6)-acetyl-L-lysyl-[protein] + CoA + H(+). It catalyses the reaction 5-methoxytryptamine + acetyl-CoA = melatonin + CoA + H(+). The enzyme catalyses serotonin + acetyl-CoA = N-acetylserotonin + CoA + H(+). Its activity is regulated as follows. Inhibited by 5-methoxytryptamine in vitro. In terms of biological role, protein acetyltransferase with dual specificity triggering both N-alpha-acetylation (NTA) and epsilon-lysine acetylation (KA), possibly with a low efficiency or toward specific plastid substrates. Involved in melatonin biosynthesis by catalyzing the formation of N-acetylserotonin (NAS) from serotonin and of melatonin (N-acetyl-5-methoxytryptamine) from 5-methoxytryptamine (5-MT). The polypeptide is GCN5-related N-acetyltransferase 1, chloroplastic (Arabidopsis thaliana (Mouse-ear cress)).